The primary structure comprises 922 residues: NEDD4-like E3 ubiquitin-protein ligase WWP1 (922 aa).

The 116-residue stretch at 1–116 (MATASPRSDT…IHNRKLERVK (116 aa)) folds into the C2 domain. 5 stretches are compositionally biased toward polar residues: residues 210-219 (GDNTPSSPSQ), 243-278 (NGESSSFAPTDNASVTGTPVVSEENALSPNCTSTTV), 286-302 (ILTSSENNECIPSTSAE), 314-323 (DTSNSRSSSA), and 340-351 (RQQSGNANTETL). The interval 210–388 (GDNTPSSPSQ…RPQPLPPGWE (179 aa)) is disordered. WW domains are found at residues 349 to 382 (ETLPSGWEQRKDPHGRTYYVDHNTRTTTWERPQP), 381 to 414 (QPLPPGWERRVDDRRRVYYVDHNTRTTTWQRPTM), 456 to 489 (GPLPPGWEKRVDSTDRVYFVNHNTKTTQWEDPRT), and 496 to 529 (EPLPEGWEIRYTREGVRYFVDHNTRTTTFKDPRN). Positions 349-531 (ETLPSGWEQR…TTFKDPRNGK (183 aa)) are required for interaction with and ubiquitination of AMOTL2. Required for interaction with YAP1. Positions 588–922 (KPYDLRRRLY…IEETEGFGQE (335 aa)) constitute an HECT domain. Cysteine 890 functions as the Glycyl thioester intermediate in the catalytic mechanism.

In terms of assembly, interacts with the Crumbs complex components PALS1 and PATJ; interaction with the Crumbs complex is enhanced by WWP1's interaction with AMOTL2 and facilitates WWP1 localization to the plasma membrane. Interaction with the Crumbs complex promotes WWP1 monoubiquitination of AMOTL2, which activates the Hippo signaling pathway. Binds KLF2 and HIVEP3. Binds SCNN1A, SCNN1B, SCNN1G, WBP1, WBP2, DRPLA and adenovirus type 2 PIII. Interacts with RNF11. Interacts with SPART. Interacts with ERBB4 isoforms JM-B CYT-1 and JM-A CYT-1. Interacts with SMAD1, SMAD2, SMAD3, SMAD5, SMAD6, SMAD7, TGFBR1 and TGFBR2. Associates with the TGFBR1:TGFBR2 receptor complex in presence of SMAD7. Interacts with SKIL isoform 1. Interacts with TP63 isoform 1 and isoform 2. Interacts with STAMBP and RNF11. Interacts with NDFIP1 and NDFIP2; this interaction activates the E3 ubiquitin-protein ligase. Interacts with TGIF. Interacts (via WW domains) with ARRDC1, ARRDC2 and ARRDC3. (Microbial infection) Interacts with HTLV-1 protein Gag. As to quaternary structure, (Microbial infection) Interacts with ebola virus protein VP40. Auto-ubiquitinated and ubiquitinated by RNF11. Detected in heart, placenta, pancreas, kidney, liver, skeletal muscle, bone marrow, fetal brain, and at much lower levels in adult brain and lung. Isoform 1 and isoform 5 predominate in all tissues tested, except in testis and bone marrow, where isoform 5 is expressed at much higher levels than isoform 1.

It localises to the cytoplasm. It is found in the cell membrane. The protein localises to the nucleus. Its subcellular location is the cell junction. It carries out the reaction S-ubiquitinyl-[E2 ubiquitin-conjugating enzyme]-L-cysteine + [acceptor protein]-L-lysine = [E2 ubiquitin-conjugating enzyme]-L-cysteine + N(6)-ubiquitinyl-[acceptor protein]-L-lysine.. It functions in the pathway protein modification; protein ubiquitination. With respect to regulation, activated by NDFIP1- and NDFIP2-binding. Functionally, E3 ubiquitin-protein ligase which accepts ubiquitin from an E2 ubiquitin-conjugating enzyme in the form of a thioester and then directly transfers the ubiquitin to targeted substrates. Ubiquitinates ERBB4 isoforms JM-A CYT-1 and JM-B CYT-1, KLF2, KLF5 and TP63 and promotes their proteasomal degradation. Ubiquitinates RNF11 without targeting it for degradation. Ubiquitinates and promotes degradation of TGFBR1; the ubiquitination is enhanced by SMAD7. Ubiquitinates SMAD6 and SMAD7. Ubiquitinates and promotes degradation of SMAD2 in response to TGF-beta signaling, which requires interaction with TGIF. Activates the Hippo signaling pathway in response to cell contact inhibition and recruitment to the Crumbs complex at the cell membrane. Monoubiquitinates AMOTL2 which facilitates its interaction with and activation of LATS2. LATS2 then phosphorylates YAP1, excluding it from the nucleus and therefore ultimately represses YAP1-driven transcription of target genes. The polypeptide is NEDD4-like E3 ubiquitin-protein ligase WWP1 (WWP1) (Homo sapiens (Human)).